Here is a 649-residue protein sequence, read N- to C-terminus: Acetyl-coenzyme A synthetase (649 aa).

Residues 189–192 (RGGK), T311, and N335 each bind CoA. Residues 387 to 389 (GEP), 411 to 416 (DTWWQT), D500, and R515 contribute to the ATP site. Residue S523 participates in CoA binding. R526 serves as a coordination point for ATP. Residues V537, H539, and V542 each contribute to the Mg(2+) site. R584 lines the CoA pocket. K609 bears the N6-acetyllysine mark.

The protein belongs to the ATP-dependent AMP-binding enzyme family. Requires Mg(2+) as cofactor. In terms of processing, acetylated. Deacetylation by the SIR2-homolog deacetylase activates the enzyme.

It catalyses the reaction acetate + ATP + CoA = acetyl-CoA + AMP + diphosphate. Catalyzes the conversion of acetate into acetyl-CoA (AcCoA), an essential intermediate at the junction of anabolic and catabolic pathways. AcsA undergoes a two-step reaction. In the first half reaction, AcsA combines acetate with ATP to form acetyl-adenylate (AcAMP) intermediate. In the second half reaction, it can then transfer the acetyl group from AcAMP to the sulfhydryl group of CoA, forming the product AcCoA. This is Acetyl-coenzyme A synthetase from Sinorhizobium fredii (strain NBRC 101917 / NGR234).